Here is a 298-residue protein sequence, read N- to C-terminus: Probable endonuclease 4 (298 aa).

Residues histidine 70, histidine 111, glutamate 146, aspartate 180, histidine 183, histidine 215, aspartate 228, histidine 230, and glutamate 260 each coordinate Zn(2+).

It belongs to the AP endonuclease 2 family. Zn(2+) is required as a cofactor.

It catalyses the reaction Endonucleolytic cleavage to 5'-phosphooligonucleotide end-products.. Functionally, endonuclease IV plays a role in DNA repair. It cleaves phosphodiester bonds at apurinic or apyrimidinic (AP) sites, generating a 3'-hydroxyl group and a 5'-terminal sugar phosphate. The protein is Probable endonuclease 4 of Halalkalibacterium halodurans (strain ATCC BAA-125 / DSM 18197 / FERM 7344 / JCM 9153 / C-125) (Bacillus halodurans).